The sequence spans 209 residues: Ribosomal RNA large subunit methyltransferase E (209 aa).

Gly63, Trp65, Asp83, Asp99, and Asp124 together coordinate S-adenosyl-L-methionine. Lys164 serves as the catalytic Proton acceptor.

It belongs to the class I-like SAM-binding methyltransferase superfamily. RNA methyltransferase RlmE family.

It localises to the cytoplasm. The enzyme catalyses uridine(2552) in 23S rRNA + S-adenosyl-L-methionine = 2'-O-methyluridine(2552) in 23S rRNA + S-adenosyl-L-homocysteine + H(+). Specifically methylates the uridine in position 2552 of 23S rRNA at the 2'-O position of the ribose in the fully assembled 50S ribosomal subunit. This chain is Ribosomal RNA large subunit methyltransferase E, found in Shewanella frigidimarina (strain NCIMB 400).